The sequence spans 515 residues: Membrane-bound lytic murein transglycosylase F (515 aa).

A signal peptide spans 1–32 (MKKLKINYLFIGILTLLLAAALWPSIPWFGKA). The non-LT domain stretch occupies residues 33 to 269 (DNRIAAIQSR…RMEEKYLGHG (237 aa)). An LT domain region spans residues 270-515 (DDFDYVDTRT…PFSLKKKDEN (246 aa)). Glu-314 is an active-site residue. The disordered stretch occupies residues 493-515 (QPSSNYLSHSPSLPFSLKKKDEN).

It in the N-terminal section; belongs to the bacterial solute-binding protein 3 family. In the C-terminal section; belongs to the transglycosylase Slt family.

Its subcellular location is the cell outer membrane. It catalyses the reaction Exolytic cleavage of the (1-&gt;4)-beta-glycosidic linkage between N-acetylmuramic acid (MurNAc) and N-acetylglucosamine (GlcNAc) residues in peptidoglycan, from either the reducing or the non-reducing ends of the peptidoglycan chains, with concomitant formation of a 1,6-anhydrobond in the MurNAc residue.. Murein-degrading enzyme that degrades murein glycan strands and insoluble, high-molecular weight murein sacculi, with the concomitant formation of a 1,6-anhydromuramoyl product. Lytic transglycosylases (LTs) play an integral role in the metabolism of the peptidoglycan (PG) sacculus. Their lytic action creates space within the PG sacculus to allow for its expansion as well as for the insertion of various structures such as secretion systems and flagella. The sequence is that of Membrane-bound lytic murein transglycosylase F from Citrobacter koseri (strain ATCC BAA-895 / CDC 4225-83 / SGSC4696).